A 176-amino-acid polypeptide reads, in one-letter code: Methylmalonyl-CoA epimerase, mitochondrial (176 aa).

A mitochondrion-targeting transit peptide spans 1–36; the sequence is MARVLKAAAANAVGLFSRLQAPIPTVRASSTSQPLD. The region spanning 47–176 is the VOC domain; sequence RLNHVAIAVP…GGVLVELEQA (130 aa). Histidine 50 is a binding site for Co(2+). N6-succinyllysine is present on lysine 114. Residue histidine 122 coordinates Co(2+). At lysine 150 the chain carries N6-acetyllysine; alternate. The residue at position 150 (lysine 150) is an N6-succinyllysine; alternate. Glutamate 172 provides a ligand contact to Co(2+).

The protein belongs to the methylmalonyl-CoA epimerase family.

Its subcellular location is the mitochondrion. The catalysed reaction is (R)-methylmalonyl-CoA = (S)-methylmalonyl-CoA. Its function is as follows. Methylmalonyl-CoA epimerase involved in propionyl-CoA metabolism. In Homo sapiens (Human), this protein is Methylmalonyl-CoA epimerase, mitochondrial.